The chain runs to 454 residues: Mitochondrial dynamics protein MID49 (454 aa).

Residues M1–D22 lie on the Mitochondrial intermembrane side of the membrane. The residue at position 13 (S13) is a Phosphoserine. Residues F23–A43 form a helical membrane-spanning segment. The Cytoplasmic segment spans residues T44–L454. Positions A76 to S119 are disordered. Low complexity predominate over residues A88–P103.

It belongs to the MID49/MID51 family. As to quaternary structure, interacts with DNM1L. In terms of tissue distribution, expressed in all tissues tested with highest expression in heart and skeletal muscle.

The protein localises to the mitochondrion outer membrane. In terms of biological role, mitochondrial outer membrane protein involved in the regulation of mitochondrial organization. It is required for mitochondrial fission and promotes the recruitment and association of the fission mediator dynamin-related protein 1 (DNM1L) to the mitochondrial surface independently of the mitochondrial fission FIS1 and MFF proteins. Regulates DNM1L GTPase activity. The polypeptide is Mitochondrial dynamics protein MID49 (MIEF2) (Homo sapiens (Human)).